The sequence spans 33 residues: Kappa-sparatoxin-Hv1a (33 aa).

Cystine bridges form between C2–C17, C9–C22, and C16–C27. At W33 the chain carries Tryptophan amide.

As to expression, expressed by the venom gland.

It is found in the secreted. In terms of biological role, blocks transient outward voltage-gated potassium channels in rat ventricular myocytes (thus prolonging action-potential duration) and rat Kv4.2/KCNA4 channels expressed in Xenopus oocytes. Is also a weak blocker of calcium channels in rat cerebellar granule cells. The chain is Kappa-sparatoxin-Hv1a from Heteropoda venatoria (Brown huntsman spider).